Consider the following 95-residue polypeptide: Small ribosomal subunit protein mS37 (95 aa).

In terms of domain architecture, CHCH spans 27 to 69 (ANRCLVLMSNLLQCWSSNGHMNPVCEKLATDLKACTSQNVMGS). 2 consecutive short sequence motifs (cx9C motif) follow at residues 30–40 (CLVLMSNLLQC) and 51–61 (CEKLATDLKAC). Cystine bridges form between Cys30/Cys61 and Cys40/Cys51.

This sequence belongs to the mitochondrion-specific ribosomal protein mS37 family. Component of the mitochondrial small ribosomal subunit.

It localises to the mitochondrion. In terms of biological role, involved in mitochondrial genome encoded proteins translation. The chain is Small ribosomal subunit protein mS37 (MRP10) from Eremothecium gossypii (strain ATCC 10895 / CBS 109.51 / FGSC 9923 / NRRL Y-1056) (Yeast).